The sequence spans 402 residues: Elongation factor Tu (402 aa).

Residues 16-211 (KEHINIGTIG…AVDSYIDSPV (196 aa)) form the tr-type G domain. The segment at 25 to 32 (GHVDHGKT) is G1. GTP is bound at residue 25–32 (GHVDHGKT). Residue T32 participates in Mg(2+) binding. The segment at 66 to 70 (GITIN) is G2. Positions 87-90 (DCPG) are G3. Residues 87–91 (DCPGH) and 142–145 (NKID) each bind GTP. Positions 142 to 145 (NKID) are G4. The interval 181 to 183 (SAR) is G5.

It belongs to the TRAFAC class translation factor GTPase superfamily. Classic translation factor GTPase family. EF-Tu/EF-1A subfamily. As to quaternary structure, monomer.

It localises to the cytoplasm. The catalysed reaction is GTP + H2O = GDP + phosphate + H(+). Its function is as follows. GTP hydrolase that promotes the GTP-dependent binding of aminoacyl-tRNA to the A-site of ribosomes during protein biosynthesis. This Mesomycoplasma hyopneumoniae (strain J / ATCC 25934 / NCTC 10110) (Mycoplasma hyopneumoniae) protein is Elongation factor Tu.